The chain runs to 630 residues: Probable potassium transport system protein Kup 1 (630 aa).

Transmembrane regions (helical) follow at residues 15-35 (LLAMALGSVGVVYGDIGTSPL), 58-78 (LISLMIWALTIIVTIKYVLFL), 104-124 (TAILFFMGIAGAALFIGDAMI), 142-162 (PALSDYVVPIAVVILLFLFAV), 173-193 (FFGPITLVWFLVMGAVGFMHI), 208-228 (AVAFLFNEGYVGIVVLGAVFL), 252-272 (WFTVVFPALTLNYLGQGAFVL), 290-310 (ALLPAVILATAATIIASQAVI), 342-362 (IYLPNVNTLLMFGVMALVFIF), 368-388 (LATAYGISVTGAMVVTTVLAF), 399-419 (AWWAAGVLLPLFALELVFLGA), and 424-444 (IHDGGYVPILIAATFIVIMWT).

This sequence belongs to the HAK/KUP transporter (TC 2.A.72) family.

It is found in the cell inner membrane. The enzyme catalyses K(+)(in) + H(+)(in) = K(+)(out) + H(+)(out). Its function is as follows. Transport of potassium into the cell. Likely operates as a K(+):H(+) symporter. The chain is Probable potassium transport system protein Kup 1 from Sinorhizobium medicae (strain WSM419) (Ensifer medicae).